Consider the following 200-residue polypeptide: GTP cyclohydrolase-2 (200 aa).

Residue 52–56 (RIHSE) participates in GTP binding. Residues Cys-57, Cys-68, and Cys-70 each contribute to the Zn(2+) site. GTP contacts are provided by residues Gln-73, 94–96 (EGR), and Thr-116. Asp-128 (proton acceptor) is an active-site residue. The active-site Nucleophile is the Arg-130. Residues Thr-151 and Lys-156 each coordinate GTP.

Belongs to the GTP cyclohydrolase II family. It depends on Zn(2+) as a cofactor.

It catalyses the reaction GTP + 4 H2O = 2,5-diamino-6-hydroxy-4-(5-phosphoribosylamino)-pyrimidine + formate + 2 phosphate + 3 H(+). It functions in the pathway cofactor biosynthesis; riboflavin biosynthesis; 5-amino-6-(D-ribitylamino)uracil from GTP: step 1/4. Its function is as follows. Catalyzes the conversion of GTP to 2,5-diamino-6-ribosylamino-4(3H)-pyrimidinone 5'-phosphate (DARP), formate and pyrophosphate. This chain is GTP cyclohydrolase-2, found in Psychromonas ingrahamii (strain DSM 17664 / CCUG 51855 / 37).